The primary structure comprises 518 residues: Filamentous growth regulator 15 (518 aa).

Positions 1-41 are enriched in polar residues; the sequence is MESTLSVSDEKLTNSSTALNNCGDNKESSQVLTTANTTTDN. 3 disordered regions span residues 1–63, 75–101, and 261–307; these read MEST…SKER, VDPN…DHGK, and KSRS…KQHR. Positions 42–52 are enriched in low complexity; sequence QQVQPKSQHQQ. Residues 77-95 show a composition bias toward polar residues; it reads PNQQSKNTVSDSVQDTTGV. Basic residues predominate over residues 262–274; sequence SRSRSKVTKKRKV. Low complexity predominate over residues 283 to 298; sequence SNTATATTSVTTPDAN. The C2H2-type zinc finger occupies 374-406; the sequence is HECQLPSAEEPHKLCLRRFSRKYELIRHQETVH. The interval 492–518 is disordered; sequence RKSSGDDTNYMETSDLESGEEEVTFNK. Over residues 505-518 the composition is skewed to acidic residues; that stretch reads SDLESGEEEVTFNK.

It is found in the nucleus. In terms of biological role, probable transcription factor involved in the regulation of filamentous growth. This is Filamentous growth regulator 15 (FGR15) from Candida albicans (strain SC5314 / ATCC MYA-2876) (Yeast).